A 1058-amino-acid chain; its full sequence is Gem-associated protein 4 (1058 aa).

Residue Met1 is modified to N-acetylmethionine. Thr84 is modified (phosphothreonine). Residues Ser86 and Ser205 each carry the phosphoserine modification. The segment at 714 to 735 (LPKEKRCLSLDRKDLAIHILEL) is leucine-zipper.

In terms of assembly, part of the core SMN complex that contains SMN1, GEMIN2/SIP1, DDX20/GEMIN3, GEMIN4, GEMIN5, GEMIN6, GEMIN7, GEMIN8 and STRAP/UNRIP. Part of the SMN-Sm complex that contains SMN1, GEMIN2/SIP1, DDX20/GEMIN3, GEMIN4, GEMIN5, GEMIN6, GEMIN7, GEMIN8, STRAP/UNRIP and the Sm proteins SNRPB, SNRPD1, SNRPD2, SNRPD3, SNRPE, SNRPF and SNRPG. Interacts with GEMIN3; the interaction is direct. Interacts with GEMIN5. Interacts with GEMIN8; the interaction is direct. Interacts with several snRNP SM core proteins, including SNRPB, SNRPD1, SNRPD2, SNRPD3 and SNRPE. Interacts with PPP4R2.

It localises to the cytoplasm. Its subcellular location is the nucleus. The protein localises to the nucleolus. The protein resides in the gem. The SMN complex catalyzes the assembly of small nuclear ribonucleoproteins (snRNPs), the building blocks of the spliceosome, and thereby plays an important role in the splicing of cellular pre-mRNAs. Most spliceosomal snRNPs contain a common set of Sm proteins SNRPB, SNRPD1, SNRPD2, SNRPD3, SNRPE, SNRPF and SNRPG that assemble in a heptameric protein ring on the Sm site of the small nuclear RNA to form the core snRNP (Sm core). In the cytosol, the Sm proteins SNRPD1, SNRPD2, SNRPE, SNRPF and SNRPG are trapped in an inactive 6S pICln-Sm complex by the chaperone CLNS1A that controls the assembly of the core snRNP. To assemble core snRNPs, the SMN complex accepts the trapped 5Sm proteins from CLNS1A forming an intermediate. Binding of snRNA inside 5Sm triggers eviction of the SMN complex, thereby allowing binding of SNRPD3 and SNRPB to complete assembly of the core snRNP. The polypeptide is Gem-associated protein 4 (GEMIN4) (Homo sapiens (Human)).